A 510-amino-acid chain; its full sequence is NAD(P)H-quinone oxidoreductase subunit 2 A, chloroplastic (510 aa).

12 helical membrane passes run 31–51 (FIFPECILIFGLILLLMIDLT), 59–79 (WFYFISSTSLVISITALLFRW), 99–119 (IFQFLILLCSTLCIPLSVEYI), 124–144 (MAITEFLLFVLTATLGGMFLC), 149–169 (LITIFVAPECFSLCSYLLSGY), 183–203 (YLLMGGASSSILVHGFSWLYG), 229–249 (ISIALIFITVGLGFKLSPAPF), 295–315 (WHLLLEILAILSMILGNLLAI), 323–343 (MLAYSSIGQIGYVIIGIIVGD), 354–374 (YMLFYISMNLGTFACIVLFGL), 395–415 (ALSLALCLLSLGGLPPLAGFF), and 418–438 (LYLFWCGWQAGLYFLVSIGLL).

It belongs to the complex I subunit 2 family. NDH is composed of at least 16 different subunits, 5 of which are encoded in the nucleus.

It is found in the plastid. Its subcellular location is the chloroplast thylakoid membrane. The enzyme catalyses a plastoquinone + NADH + (n+1) H(+)(in) = a plastoquinol + NAD(+) + n H(+)(out). It catalyses the reaction a plastoquinone + NADPH + (n+1) H(+)(in) = a plastoquinol + NADP(+) + n H(+)(out). In terms of biological role, NDH shuttles electrons from NAD(P)H:plastoquinone, via FMN and iron-sulfur (Fe-S) centers, to quinones in the photosynthetic chain and possibly in a chloroplast respiratory chain. The immediate electron acceptor for the enzyme in this species is believed to be plastoquinone. Couples the redox reaction to proton translocation, and thus conserves the redox energy in a proton gradient. This Saccharum officinarum (Sugarcane) protein is NAD(P)H-quinone oxidoreductase subunit 2 A, chloroplastic.